We begin with the raw amino-acid sequence, 813 residues long: Ribosome-releasing factor 2, mitochondrial (813 aa).

Residues 1 to 20 (MLRIVWKPLKIRLPVWRRYQ) constitute a mitochondrion transit peptide. The tr-type G domain maps to 26–314 (NSIRNVGIIA…AIIDYLPSPV (289 aa)). Residues 35–42 (AHIDAGKT), 99–103 (DTPGH), and 153–156 (NKMD) contribute to the GTP site.

Belongs to the TRAFAC class translation factor GTPase superfamily. Classic translation factor GTPase family. EF-G/EF-2 subfamily.

It is found in the mitochondrion. Functionally, mitochondrial GTPase that mediates the disassembly of ribosomes from messenger RNA at the termination of mitochondrial protein biosynthesis. Not involved in the GTP-dependent ribosomal translocation step during translation elongation. The sequence is that of Ribosome-releasing factor 2, mitochondrial (mef2) from Schizosaccharomyces pombe (strain 972 / ATCC 24843) (Fission yeast).